The following is a 130-amino-acid chain: Guanylate kinase (130 aa).

One can recognise a Guanylate kinase-like domain in the interval 1–130 (KIFEDPTTSY…EKIQSRVNEA (130 aa)).

This sequence belongs to the guanylate kinase family.

The protein localises to the cytoplasm. The enzyme catalyses GMP + ATP = GDP + ADP. In terms of biological role, essential for recycling GMP and indirectly, cGMP. This is Guanylate kinase (gmk) from Staphylococcus epidermidis.